The primary structure comprises 412 residues: Cinnamoyl-CoA:phenyllactate CoA-transferase (412 aa).

Residue asparagine 102 coordinates CoA. Aspartate 176 functions as the Nucleophile in the catalytic mechanism.

As to quaternary structure, homodimer. Part of the heterotrimeric phenyllactate dehydratase complex FldABC, composed of (R)-phenyllactate CoA-transferase (FldA) and a heterodimeric (R)-phenyllactyl-CoA dehydratase (FldB and FldC).

It catalyses the reaction (E)-cinnamoyl-CoA + (R)-3-phenyllactate = (R)-3-phenyllactoyl-CoA + (E)-cinnamate. Its pathway is amino-acid degradation; L-phenylalanine degradation. In terms of biological role, component of the phenyllactate dehydratase complex FldABC that is involved in the fermentation of L-phenylalanine via a Stickland reaction. This complex catalyzes the reversible syn-dehydration of (R)-phenyllactate to (E)-cinnamate in two steps, a CoA-transfer from cinnamoyl-CoA to phenyllactate, catalyzed by FldA, followed by the dehydration of phenyllactyl-CoA to cinnamoyl-CoA, catalyzed by FldB and FldC. In vitro, FldA can use 3-phenylpropanoate as a better CoA-acceptor than phenyllactate. The protein is Cinnamoyl-CoA:phenyllactate CoA-transferase of Clostridium sporogenes.